We begin with the raw amino-acid sequence, 101 residues long: Large ribosomal subunit protein bL21 (101 aa).

The protein belongs to the bacterial ribosomal protein bL21 family. As to quaternary structure, part of the 50S ribosomal subunit. Contacts protein L20.

Its function is as follows. This protein binds to 23S rRNA in the presence of protein L20. The polypeptide is Large ribosomal subunit protein bL21 (Anaeromyxobacter dehalogenans (strain 2CP-1 / ATCC BAA-258)).